The chain runs to 1272 residues: Presporeless protein A (1272 aa).

A Nuclear localization signal motif is present at residues 146–161; it reads KDKRIKPIDPKKKISR. Disordered stretches follow at residues 369 to 403 and 468 to 490; these read ASTI…DDTS and STSS…NQLK. The segment covering 374–392 has biased composition (acidic residues); it reads DGEEEDDDDDDNDVDGNDD. Positions 393-403 are enriched in basic and acidic residues; the sequence is DNNKEKVDDTS. A compositionally biased stretch (low complexity) spans 468 to 487; the sequence is STSSTNTASSTRSKASSNSN.

It localises to the nucleus. Its function is as follows. Functions autonomously, very early in the prespore pathway, to control prespore cell differentiation, maybe at the level of transcription. Also required for proper aggregation. The chain is Presporeless protein A (pslA) from Dictyostelium discoideum (Social amoeba).